The chain runs to 212 residues: Large ribosomal subunit protein uL3 (212 aa).

The interval 135 to 161 (MTHGNSLSHRAPGSIGQNQSPGKVFKG) is disordered. Gln153 carries the post-translational modification N5-methylglutamine.

This sequence belongs to the universal ribosomal protein uL3 family. Part of the 50S ribosomal subunit. Forms a cluster with proteins L14 and L19. In terms of processing, methylated by PrmB.

In terms of biological role, one of the primary rRNA binding proteins, it binds directly near the 3'-end of the 23S rRNA, where it nucleates assembly of the 50S subunit. This is Large ribosomal subunit protein uL3 from Alteromonas mediterranea (strain DSM 17117 / CIP 110805 / LMG 28347 / Deep ecotype).